The chain runs to 148 residues: Deoxyuridine 5'-triphosphate nucleotidohydrolase (148 aa).

Substrate is bound by residues 67–69, Asn80, 84–86, and Met94; these read RSG and LID.

The protein belongs to the dUTPase family. Requires Mg(2+) as cofactor.

It catalyses the reaction dUTP + H2O = dUMP + diphosphate + H(+). The protein operates within pyrimidine metabolism; dUMP biosynthesis; dUMP from dCTP (dUTP route): step 2/2. Functionally, this enzyme is involved in nucleotide metabolism: it produces dUMP, the immediate precursor of thymidine nucleotides and it decreases the intracellular concentration of dUTP so that uracil cannot be incorporated into DNA. This Paraburkholderia phytofirmans (strain DSM 17436 / LMG 22146 / PsJN) (Burkholderia phytofirmans) protein is Deoxyuridine 5'-triphosphate nucleotidohydrolase.